We begin with the raw amino-acid sequence, 155 residues long: SsrA-binding protein (155 aa).

It belongs to the SmpB family.

It is found in the cytoplasm. Functionally, required for rescue of stalled ribosomes mediated by trans-translation. Binds to transfer-messenger RNA (tmRNA), required for stable association of tmRNA with ribosomes. tmRNA and SmpB together mimic tRNA shape, replacing the anticodon stem-loop with SmpB. tmRNA is encoded by the ssrA gene; the 2 termini fold to resemble tRNA(Ala) and it encodes a 'tag peptide', a short internal open reading frame. During trans-translation Ala-aminoacylated tmRNA acts like a tRNA, entering the A-site of stalled ribosomes, displacing the stalled mRNA. The ribosome then switches to translate the ORF on the tmRNA; the nascent peptide is terminated with the 'tag peptide' encoded by the tmRNA and targeted for degradation. The ribosome is freed to recommence translation, which seems to be the essential function of trans-translation. The polypeptide is SsrA-binding protein (Streptococcus pneumoniae (strain Hungary19A-6)).